A 449-amino-acid chain; its full sequence is Myb-related protein Pp1 (449 aa).

Residues 1–30 (LGNRWSAIAIPRRTDNEIKNYWNTHLKKRL) enclose the HTH myb-type domain. The segment at residues 5 to 26 (WSAIAIPRRTDNEIKNYWNTHL) is a DNA-binding region (H-T-H motif).

It localises to the nucleus. Its function is as follows. Possible transcription activator. This chain is Myb-related protein Pp1 (PP1), found in Physcomitrium patens (Spreading-leaved earth moss).